The primary structure comprises 238 residues: Probable tetraspanin tspC (238 aa).

Residues 1 to 16 are Cytoplasmic-facing; that stretch reads MVNTRDFLPKTTHYLK. A helical membrane pass occupies residues 17–37; the sequence is VPIIGLNAILWLLGLVLIVVG. Residues 38–69 are Extracellular-facing; that stretch reads SVCISFFSNFKEFTKESGYKNALSNLTTSAPT. An N-linked (GlcNAc...) asparagine glycan is attached at Asn-62. The chain crosses the membrane as a helical span at residues 70-90; sequence GVLVIGIFFILLTLVGCFVAY. The Cytoplasmic portion of the chain corresponds to 91–93; it reads KEK. Residues 94-114 form a helical membrane-spanning segment; sequence LVGLVLYTMLMLILLVVLIGI. Residues 115–197 are Extracellular-facing; that stretch reads GGKALTLDKE…GIFTKQVSSK (83 aa). N-linked (GlcNAc...) asparagine glycosylation is found at Asn-143 and Asn-164. The helical transmembrane segment at 198 to 218 threads the bilayer; sequence LVLVGIAGVVIGCIEFVAMAL. At 219–238 the chain is on the cytoplasmic side; it reads SLFLIIRICRSPRSRAYDQY.

The protein belongs to the tetraspanin (TM4SF) family.

The protein resides in the membrane. The polypeptide is Probable tetraspanin tspC (tspC) (Dictyostelium discoideum (Social amoeba)).